The primary structure comprises 361 residues: Histidinol-phosphate aminotransferase (361 aa).

K224 is modified (N6-(pyridoxal phosphate)lysine).

Belongs to the class-II pyridoxal-phosphate-dependent aminotransferase family. Histidinol-phosphate aminotransferase subfamily. As to quaternary structure, homodimer. The cofactor is pyridoxal 5'-phosphate.

It carries out the reaction L-histidinol phosphate + 2-oxoglutarate = 3-(imidazol-4-yl)-2-oxopropyl phosphate + L-glutamate. It participates in amino-acid biosynthesis; L-histidine biosynthesis; L-histidine from 5-phospho-alpha-D-ribose 1-diphosphate: step 7/9. In Limosilactobacillus fermentum (strain NBRC 3956 / LMG 18251) (Lactobacillus fermentum), this protein is Histidinol-phosphate aminotransferase.